The chain runs to 154 residues: D-aminoacyl-tRNA deacylase (154 aa).

The Gly-cisPro motif, important for rejection of L-amino acids motif lies at Gly-142–Pro-143.

The protein belongs to the DTD family. In terms of assembly, homodimer.

Its subcellular location is the cytoplasm. The enzyme catalyses glycyl-tRNA(Ala) + H2O = tRNA(Ala) + glycine + H(+). It catalyses the reaction a D-aminoacyl-tRNA + H2O = a tRNA + a D-alpha-amino acid + H(+). Its function is as follows. An aminoacyl-tRNA editing enzyme that deacylates mischarged D-aminoacyl-tRNAs. Also deacylates mischarged glycyl-tRNA(Ala), protecting cells against glycine mischarging by AlaRS. Acts via tRNA-based rather than protein-based catalysis; rejects L-amino acids rather than detecting D-amino acids in the active site. By recycling D-aminoacyl-tRNA to D-amino acids and free tRNA molecules, this enzyme counteracts the toxicity associated with the formation of D-aminoacyl-tRNA entities in vivo and helps enforce protein L-homochirality. The protein is D-aminoacyl-tRNA deacylase of Polaromonas sp. (strain JS666 / ATCC BAA-500).